Reading from the N-terminus, the 410-residue chain is Gamma-glutamyl phosphate reductase (410 aa).

Belongs to the gamma-glutamyl phosphate reductase family.

It is found in the cytoplasm. It carries out the reaction L-glutamate 5-semialdehyde + phosphate + NADP(+) = L-glutamyl 5-phosphate + NADPH + H(+). It participates in amino-acid biosynthesis; L-proline biosynthesis; L-glutamate 5-semialdehyde from L-glutamate: step 2/2. Catalyzes the NADPH-dependent reduction of L-glutamate 5-phosphate into L-glutamate 5-semialdehyde and phosphate. The product spontaneously undergoes cyclization to form 1-pyrroline-5-carboxylate. The sequence is that of Gamma-glutamyl phosphate reductase from Campylobacter jejuni subsp. jejuni serotype O:23/36 (strain 81-176).